The following is a 141-amino-acid chain: MVDMDRISISLPTNLLAEFDDIIAERGYASRSEAIRDSIRDYLIKHKWIHSLEGSRAGTISIIYDHHSTDVMEKLTTIQHDYEKIIVATIHMHLDHDHCMEVVLVRGDASNIKELTDKLTSQKGVKQVKLTVMVPGGNIPQ.

The Ni(2+) site is built by His-80, His-91, His-93, and Cys-99.

It belongs to the transcriptional regulatory CopG/NikR family. Ni(2+) is required as a cofactor.

Transcriptional regulator. The protein is Putative nickel-responsive regulator of Methanococcus vannielii (strain ATCC 35089 / DSM 1224 / JCM 13029 / OCM 148 / SB).